Consider the following 1448-residue polypeptide: Probable serine/threonine-protein kinase irlB (1448 aa).

Residues 412-423 (DDDDYDDYDDDD) show a composition bias toward acidic residues. The disordered stretch occupies residues 412 to 446 (DDDDYDDYDDDDDHHSGCNNNNNNNNDGDHNEDEN). Residues 428–437 (GCNNNNNNNN) are compositionally biased toward low complexity. Coiled-coil stretches lie at residues 666–817 (AESE…EIQN), 887–921 (EIQL…SNMK), and 974–1016 (ENNK…QDED). The tract at residues 975–1008 (NNKKQNLINDNNNNNNNNNNNNNNNNNNNNNNKL) is disordered. Residues 978–1008 (KQNLINDNNNNNNNNNNNNNNNNNNNNNNKL) show a composition bias toward low complexity. The 267-residue stretch at 1027 to 1293 (RNESNILGRG…IQNVLNHPLF (267 aa)) folds into the Protein kinase domain. ATP is bound by residues 1033–1041 (LGRGSNGTL) and Lys-1056. The active-site Proton acceptor is the Asp-1151. One can recognise a KEN domain in the interval 1296–1448 (LEKKIQFIDA…TIDYLFNFYN (153 aa)).

This sequence belongs to the protein kinase superfamily. Ser/Thr protein kinase family.

The enzyme catalyses L-seryl-[protein] + ATP = O-phospho-L-seryl-[protein] + ADP + H(+). It catalyses the reaction L-threonyl-[protein] + ATP = O-phospho-L-threonyl-[protein] + ADP + H(+). The protein is Probable serine/threonine-protein kinase irlB (irlB-1) of Dictyostelium discoideum (Social amoeba).